Here is a 543-residue protein sequence, read N- to C-terminus: Steroid receptor seven-up, isoforms B/C (543 aa).

The disordered stretch occupies residues Pro-38–Gln-191. The segment covering Ala-56 to Val-68 has biased composition (low complexity). Residues Gln-83–Gly-101 are compositionally biased toward polar residues. Gly residues predominate over residues Gly-122–Pro-141. The span at Met-158 to Gly-170 shows a compositional bias: polar residues. Residues Ser-171–Gln-191 show a composition bias toward low complexity. A DNA-binding region (nuclear receptor) is located at residues Asn-197–Arg-272. 2 NR C4-type zinc fingers span residues Cys-200–Cys-220 and Cys-236–Cys-260. An NR LBD domain is found at Tyr-307–Gly-532.

Belongs to the nuclear hormone receptor family. NR2 subfamily. Expressed in several embryonic tissues; dorsal vessel, oenocyte and fat body. CNS expression is dynamic and confined to temporally restricted subsections of the NB lineage; expressed in many NB and GMCs, but only a small number of neurons.

Its subcellular location is the nucleus. Its function is as follows. Receptor that is required in photoreceptors R1, R3, R4 and R6 during eye development; generation of the ganglion mother cell-2 (GMC-2) fate in the nb7-3 lineage, coinciding with the transition in the expression of HB to KR in the neuroblasts (NBs). This is Steroid receptor seven-up, isoforms B/C (svp) from Drosophila melanogaster (Fruit fly).